We begin with the raw amino-acid sequence, 306 residues long: tRNA pseudouridine synthase B (306 aa).

The active-site Nucleophile is the Asp47.

This sequence belongs to the pseudouridine synthase TruB family. Type 1 subfamily.

It carries out the reaction uridine(55) in tRNA = pseudouridine(55) in tRNA. In terms of biological role, responsible for synthesis of pseudouridine from uracil-55 in the psi GC loop of transfer RNAs. The polypeptide is tRNA pseudouridine synthase B (Neisseria gonorrhoeae (strain NCCP11945)).